The following is a 750-amino-acid chain: Photosystem I P700 chlorophyll a apoprotein A1 (750 aa).

A run of 8 helical transmembrane segments spans residues 70–93 (VFSAHFGQLSIIFLWLSGMYFHGA), 156–179 (LYCTAIGALVFAALMLFAGWFHYH), 195–219 (LNHHLAGLLGLGSLSWAGHQVHVSL), 291–309 (IAHHHLAIAILFLIAGHMY), 346–369 (WHAQLSLNLAMLGSLTIVVAHHMY), 385–411 (LSLFTHHMWIGGFLIVGAAAHAAIFMV), 433–455 (AIISHLNWVCIFLGFHSFGLYIH), and 531–549 (FLVHHIHAFTIHVTVLILL). [4Fe-4S] cluster contacts are provided by Cys-573 and Cys-582. The next 2 helical transmembrane spans lie at 589–610 (HVFLGLFWMYNAISVVIFHFSW) and 664–686 (LSAYGLFFLGAHFVWAFSLMFLF). A chlorophyll a'-binding site is contributed by His-675. Positions 683 and 691 each coordinate chlorophyll a. Trp-692 is a phylloquinone binding site. Residues 724–744 (AVGVTHYLLGGIATTWAFFLA) form a helical membrane-spanning segment.

It belongs to the PsaA/PsaB family. As to quaternary structure, the PsaA/B heterodimer binds the P700 chlorophyll special pair and subsequent electron acceptors. PSI consists of a core antenna complex that captures photons, and an electron transfer chain that converts photonic excitation into a charge separation. The eukaryotic PSI reaction center is composed of at least 11 subunits. Requires P700 is a chlorophyll a/chlorophyll a' dimer, A0 is one or more chlorophyll a, A1 is one or both phylloquinones and FX is a shared 4Fe-4S iron-sulfur center. as cofactor.

It localises to the plastid. The protein resides in the chloroplast thylakoid membrane. It carries out the reaction reduced [plastocyanin] + hnu + oxidized [2Fe-2S]-[ferredoxin] = oxidized [plastocyanin] + reduced [2Fe-2S]-[ferredoxin]. PsaA and PsaB bind P700, the primary electron donor of photosystem I (PSI), as well as the electron acceptors A0, A1 and FX. PSI is a plastocyanin-ferredoxin oxidoreductase, converting photonic excitation into a charge separation, which transfers an electron from the donor P700 chlorophyll pair to the spectroscopically characterized acceptors A0, A1, FX, FA and FB in turn. Oxidized P700 is reduced on the lumenal side of the thylakoid membrane by plastocyanin. This is Photosystem I P700 chlorophyll a apoprotein A1 from Draba nemorosa (Woodland whitlowgrass).